Reading from the N-terminus, the 731-residue chain is Autophagy-related protein 20 (731 aa).

Polar residues predominate over residues M1–K22. Positions M1 to V130 are disordered. Over residues K31–I41 the composition is skewed to basic and acidic residues. Positions S69–T82 are enriched in polar residues. 2 stretches are compositionally biased toward low complexity: residues N92–G102 and L113–S128. The 177-residue stretch at I164–G340 folds into the PX domain. 3 residues coordinate a 1,2-diacyl-sn-glycero-3-phospho-(1D-myo-inositol-3-phosphate): R205, S207, and K231. The interval S253 to S277 is disordered. Gly residues predominate over residues G259 to S277. An a 1,2-diacyl-sn-glycero-3-phospho-(1D-myo-inositol-3-phosphate)-binding site is contributed by R306. The disordered stretch occupies residues N586–S626. Positions P608–S617 are enriched in pro residues.

Belongs to the sorting nexin family.

It is found in the endosome membrane. The protein localises to the preautophagosomal structure membrane. In terms of biological role, required for cytoplasm to vacuole transport (Cvt), pexophagy and mitophagy. Also involved in endoplasmic reticulum-specific autophagic process and is essential for the survival of cells subjected to severe ER stress. Functions in protein retrieval from the endocytic pathway. In Candida albicans (strain SC5314 / ATCC MYA-2876) (Yeast), this protein is Autophagy-related protein 20 (ATG20).